The sequence spans 359 residues: Innexin inx2 (359 aa).

Residues 1 to 22 (MFDVFGSVKGLLKLDSVCIDNN) lie on the Cytoplasmic side of the membrane. Residues 23–43 (LFRLHYKATVIILIAFSLLVT) traverse the membrane as a helical segment. Residues 44–109 (SRQYIGDPID…KDEVKYHKYY (66 aa)) are Extracellular-facing. The chain crosses the membrane as a helical span at residues 110–130 (QWVCFVLFFQAILFYIPRYLW). The Cytoplasmic portion of the chain corresponds to 131–180 (KTWEGGRIKMLVLDLNSPVVNEQSKADRKKLLVDYFATNLHTQNFYAYRF). Residues 181 to 201 (FICEALNFVNVVGQIYFMDLF) traverse the membrane as a helical segment. The Extracellular segment spans residues 202–266 (LDGEFTTYGS…VLPLNIVNEK (65 aa)). A helical membrane pass occupies residues 267–287 (IYVFLWFWFVILSVLTGIGLV). Residues 288-359 (YRLATAMGPQ…AKKLEGKEIV (72 aa)) are Cytoplasmic-facing.

It belongs to the pannexin family. Widespread expression in embryo, in anterior and posterior row of neural precursors, midline precursors and in epithelial sheet of stomodeum.

The protein localises to the cell membrane. Its subcellular location is the cell junction. It is found in the gap junction. In terms of biological role, structural components of the gap junctions. The polypeptide is Innexin inx2 (inx2) (Schistocerca americana (American grasshopper)).